A 33-amino-acid polypeptide reads, in one-letter code: Protamine-M6/M7 (33 aa).

Residues 1-33 (PRRRRETSRPIRRRRRARRAPIRRRRRVVRRRR) form a disordered region.

Testis.

Its subcellular location is the nucleus. The protein localises to the chromosome. In terms of biological role, protamines substitute for histones in the chromatin of sperm during the haploid phase of spermatogenesis. They compact sperm DNA into a highly condensed, stable and inactive complex. The polypeptide is Protamine-M6/M7 (Mugil cephalus (Flathead mullet)).